Reading from the N-terminus, the 468-residue chain is Probable xyloglucan galactosyltransferase GT13 (468 aa).

Residues 1 to 18 (MDKFNPKKEKTVKKRALK) lie on the Cytoplasmic side of the membrane. A helical; Signal-anchor for type II membrane protein transmembrane segment spans residues 19-35 (VLTEISPTPLFSMLFLL). Topologically, residues 36–468 (HISQIATYLS…RVSLFKMTRI (433 aa)) are lumenal. N-linked (GlcNAc...) asparagine glycosylation is found at asparagine 53, asparagine 116, asparagine 153, asparagine 240, and asparagine 412.

It belongs to the glycosyltransferase 47 family. Expressed in roots, hypocotyls, cotyledons, leaves, stems, petals and carpels.

Its subcellular location is the golgi apparatus membrane. Functions in xyloglucan synthesis by adding side chains to the xylosylated glucan backbone. Involved in the galactosylation of hemicellulose xyloglucan. The polypeptide is Probable xyloglucan galactosyltransferase GT13 (Arabidopsis thaliana (Mouse-ear cress)).